We begin with the raw amino-acid sequence, 275 residues long: Elongation factor Ts (275 aa).

The segment at 76 to 79 (TDFV) is involved in Mg(2+) ion dislocation from EF-Tu.

It belongs to the EF-Ts family.

It localises to the cytoplasm. Associates with the EF-Tu.GDP complex and induces the exchange of GDP to GTP. It remains bound to the aminoacyl-tRNA.EF-Tu.GTP complex up to the GTP hydrolysis stage on the ribosome. The protein is Elongation factor Ts of Mycolicibacterium paratuberculosis (strain ATCC BAA-968 / K-10) (Mycobacterium paratuberculosis).